The primary structure comprises 389 residues: Cytochrome b (389 aa).

4 helical membrane-spanning segments follow: residues 32–52 (FGSLLGICLVLQILTGCFLAM), 76–98 (WIVRYTHANVASFFFIFVYAHIG), 113–133 (LWSIGVIILVLMMAIGFLGYV), and 179–199 (FFSLHYILPFVLAALVVAHFM). Heme b-binding residues include H82 and H96. Residues H183 and H197 each contribute to the heme b site. H202 provides a ligand contact to a ubiquinone. Helical transmembrane passes span 225–245 (FIFKDLVTIFAFFWILSVIVF), 289–309 (LLGVVAMFGSLLILLVLPLTD), 321–341 (AMKFFFWFFVVNFIMLFWLGS), and 348–368 (YLEIGQLSTTFYFSFFLVIVP).

Belongs to the cytochrome b family. Fungal cytochrome b-c1 complex contains 10 subunits; 3 respiratory subunits, 2 core proteins and 5 low-molecular weight proteins. Cytochrome b-c1 complex is a homodimer. Heme b serves as cofactor.

The protein localises to the mitochondrion inner membrane. Functionally, component of the ubiquinol-cytochrome c reductase complex (complex III or cytochrome b-c1 complex) that is part of the mitochondrial respiratory chain. The b-c1 complex mediates electron transfer from ubiquinol to cytochrome c. Contributes to the generation of a proton gradient across the mitochondrial membrane that is then used for ATP synthesis. In Strobilurus tenacellus, this protein is Cytochrome b (COB).